A 553-amino-acid chain; its full sequence is Hydroxylamine reductase (553 aa).

Residues cysteine 3, cysteine 6, cysteine 18, and cysteine 25 each coordinate [2Fe-2S] cluster. Hybrid [4Fe-2O-2S] cluster contacts are provided by histidine 249, glutamate 273, cysteine 317, cysteine 405, cysteine 433, cysteine 459, glutamate 493, and lysine 495. Cysteine 405 carries the cysteine persulfide modification.

This sequence belongs to the HCP family. The cofactor is [2Fe-2S] cluster. Hybrid [4Fe-2O-2S] cluster serves as cofactor.

It is found in the cytoplasm. The catalysed reaction is A + NH4(+) + H2O = hydroxylamine + AH2 + H(+). Functionally, catalyzes the reduction of hydroxylamine to form NH(3) and H(2)O. The polypeptide is Hydroxylamine reductase (Actinobacillus succinogenes (strain ATCC 55618 / DSM 22257 / CCUG 43843 / 130Z)).